Reading from the N-terminus, the 98-residue chain is VQ motif-containing protein 1 (98 aa).

The VQ signature appears at phenylalanine 27–glycine 36.

Interacts with WRKY33.

It localises to the nucleus. In terms of biological role, may modulate WRKY transcription factor activities. The sequence is that of VQ motif-containing protein 1 from Arabidopsis thaliana (Mouse-ear cress).